The primary structure comprises 445 residues: GRAM domain-containing protein 2B (445 aa).

Methionine 1 is modified (N-acetylmethionine). Over residues 1 to 10 (MVKKPISSSD) the composition is skewed to polar residues. Residues 1–119 (MVKKPISSSD…RKKSSSSSQY (119 aa)) are disordered. Residues 18–37 (PSSPKSSAGASHSSTDSPSS) are compositionally biased toward low complexity. 2 stretches are compositionally biased toward polar residues: residues 56–68 (KSPTAQSPTSSVE) and 82–93 (SKSSFDGSNLLS). The span at 94 to 112 (DKNDCKTESKADSKTERKK) shows a compositional bias: basic and acidic residues. A GRAM domain is found at 123–190 (MHFHKLFLDV…FSVTLIKKTK (68 aa)). Serine 238, serine 255, and serine 265 each carry phosphoserine. The disordered stretch occupies residues 277–331 (DLEGYSSSGSQTPESENSRDFHVTESQTVLNVTKGETKPPRTDAHGSRAPDGKAK). Residues 281-291 (YSSSGSQTPES) are compositionally biased toward polar residues. Residues 311 to 330 (GETKPPRTDAHGSRAPDGKA) show a composition bias toward basic and acidic residues.

The sequence is that of GRAM domain-containing protein 2B (Gramd2b) from Rattus norvegicus (Rat).